A 145-amino-acid polypeptide reads, in one-letter code: 3-hydroxyacyl-[acyl-carrier-protein] dehydratase FabZ (145 aa).

Residue histidine 47 is part of the active site.

This sequence belongs to the thioester dehydratase family. FabZ subfamily.

It is found in the cytoplasm. The catalysed reaction is a (3R)-hydroxyacyl-[ACP] = a (2E)-enoyl-[ACP] + H2O. Its function is as follows. Involved in unsaturated fatty acids biosynthesis. Catalyzes the dehydration of short chain beta-hydroxyacyl-ACPs and long chain saturated and unsaturated beta-hydroxyacyl-ACPs. This is 3-hydroxyacyl-[acyl-carrier-protein] dehydratase FabZ from Polaromonas sp. (strain JS666 / ATCC BAA-500).